Reading from the N-terminus, the 285-residue chain is Bifunctional protein FolD 2 (285 aa).

NADP(+)-binding positions include G164 to S166, S189, and V230.

Belongs to the tetrahydrofolate dehydrogenase/cyclohydrolase family. In terms of assembly, homodimer.

The catalysed reaction is (6R)-5,10-methylene-5,6,7,8-tetrahydrofolate + NADP(+) = (6R)-5,10-methenyltetrahydrofolate + NADPH. It catalyses the reaction (6R)-5,10-methenyltetrahydrofolate + H2O = (6R)-10-formyltetrahydrofolate + H(+). It participates in one-carbon metabolism; tetrahydrofolate interconversion. Functionally, catalyzes the oxidation of 5,10-methylenetetrahydrofolate to 5,10-methenyltetrahydrofolate and then the hydrolysis of 5,10-methenyltetrahydrofolate to 10-formyltetrahydrofolate. This is Bifunctional protein FolD 2 from Geobacter metallireducens (strain ATCC 53774 / DSM 7210 / GS-15).